The sequence spans 164 residues: NADH-quinone oxidoreductase subunit I (164 aa).

4Fe-4S ferredoxin-type domains follow at residues leucine 55 to glutamate 85 and threonine 95 to asparagine 124. [4Fe-4S] cluster contacts are provided by cysteine 65, cysteine 68, cysteine 71, cysteine 75, cysteine 104, cysteine 107, cysteine 110, and cysteine 114.

This sequence belongs to the complex I 23 kDa subunit family. As to quaternary structure, NDH-1 is composed of 14 different subunits. Subunits NuoA, H, J, K, L, M, N constitute the membrane sector of the complex. It depends on [4Fe-4S] cluster as a cofactor.

The protein resides in the cell inner membrane. It carries out the reaction a quinone + NADH + 5 H(+)(in) = a quinol + NAD(+) + 4 H(+)(out). Its function is as follows. NDH-1 shuttles electrons from NADH, via FMN and iron-sulfur (Fe-S) centers, to quinones in the respiratory chain. The immediate electron acceptor for the enzyme in this species is believed to be ubiquinone. Couples the redox reaction to proton translocation (for every two electrons transferred, four hydrogen ions are translocated across the cytoplasmic membrane), and thus conserves the redox energy in a proton gradient. The protein is NADH-quinone oxidoreductase subunit I of Ruegeria pomeroyi (strain ATCC 700808 / DSM 15171 / DSS-3) (Silicibacter pomeroyi).